Consider the following 103-residue polypeptide: Large ribosomal subunit protein bL21 (103 aa).

The protein belongs to the bacterial ribosomal protein bL21 family. As to quaternary structure, part of the 50S ribosomal subunit. Contacts protein L20.

Functionally, this protein binds to 23S rRNA in the presence of protein L20. The protein is Large ribosomal subunit protein bL21 of Pseudomonas aeruginosa (strain LESB58).